The sequence spans 661 residues: 72 kDa type IV collagenase (661 aa).

A signal peptide spans 1–30; it reads MTEARVSRGALAALLRALCALGCLLGRAAA. Residues 31–110 constitute a propeptide, activation peptide; the sequence is APSPIIKFPG…PRCGNPDVAN (80 aa). The Cysteine switch signature appears at 101 to 108; it reads PRCGNPDV. Residue C103 participates in Zn(2+) binding. A collagenase-like 1 region spans residues 111 to 222; it reads YNFFPRKPKW…LRTLGEGQVV (112 aa). Ca(2+) contacts are provided by D135 and D169. 2 residues coordinate Zn(2+): H179 and D181. Ca(2+) contacts are provided by D186 and G187. Position 194 (H194) interacts with Zn(2+). Positions 201, 203, and 205 each coordinate Ca(2+). Residue H207 participates in Zn(2+) binding. Residues D209, D210, and E212 each coordinate Ca(2+). The tract at residues 223 to 397 is collagen-binding; that stretch reads RVKYGNADGE…WGFCPDQGYS (175 aa). Fibronectin type-II domains follow at residues 229–277, 287–335, and 345–393; these read ADGE…FCPH, ADGQ…FCPE, and SEGA…FCPD. 6 disulfides stabilise this stretch: C234/C260, C248/C275, C292/C318, C306/C333, C350/C376, and C364/C391. The segment at 398–466 is collagenase-like 2; sequence LFLVAAHEFG…GPTPTLGPVT (69 aa). Residue H404 participates in Zn(2+) binding. Residue E405 is part of the active site. Positions 408 and 414 each coordinate Zn(2+). The required for inhibitor TIMP2 binding stretch occupies residues 415 to 661; it reads SQDPGALMAP…GSIKSDWLGC (247 aa). Hemopexin repeat units follow at residues 469 to 517, 518 to 564, 566 to 614, and 615 to 661; these read LCKQ…WPEL, PEKI…GLPP, VQKV…WNAI, and PDNL…WLGC. Residues C470 and C661 are joined by a disulfide bond. Positions 477, 522, and 570 each coordinate Ca(2+). N-linked (GlcNAc...) asparagine glycosylation occurs at N574. Position 619 (D619) interacts with Ca(2+). A glycan (N-linked (GlcNAc...) asparagine) is linked at N643.

It belongs to the peptidase M10A family. Interacts (via the C-terminal hemopexin-like domains-containing region) with the integrin alpha-V/beta-3; the interaction promotes vascular invasion in angiogenic vessels and melamoma cells. Interacts (via the C-terminal PEX domain) with TIMP2 (via the C-terminal); the interaction inhibits the degradation activity. Interacts with GSK3B. Requires Ca(2+) as cofactor. It depends on Zn(2+) as a cofactor. Post-translationally, phosphorylation on multiple sites modulates enzymatic activity. Phosphorylated by PKC in vitro. The propeptide is processed by MMP14 (MT-MMP1) and MMP16 (MT-MMP3). Autocatalytic cleavage in the C-terminal produces the anti-angiogenic peptide, PEX. This processing appears to be facilitated by binding integrinv/beta3.

It is found in the secreted. Its subcellular location is the extracellular space. The protein localises to the extracellular matrix. The protein resides in the membrane. It localises to the nucleus. The catalysed reaction is Cleavage of gelatin type I and collagen types IV, V, VII, X. Cleaves the collagen-like sequence Pro-Gln-Gly-|-Ile-Ala-Gly-Gln.. Ubiquitinous metalloproteinase that is involved in diverse functions such as remodeling of the vasculature, angiogenesis, tissue repair, tumor invasion, inflammation, and atherosclerotic plaque rupture. As well as degrading extracellular matrix proteins, can also act on several nonmatrix proteins such as big endothelial 1 and beta-type CGRP promoting vasoconstriction. Also cleaves KISS at a Gly-|-Leu bond. Appears to have a role in myocardial cell death pathways. Contributes to myocardial oxidative stress by regulating the activity of GSK3beta. Cleaves GSK3beta in vitro. Involved in the formation of the fibrovascular tissues. Functionally, PEX, the C-terminal non-catalytic fragment of MMP2, possesses anti-angiogenic and anti-tumor properties and inhibits cell migration and cell adhesion to FGF2 and vitronectin. Ligand for integrin alpha-v/beta-3 on the surface of blood vessels. In Bos taurus (Bovine), this protein is 72 kDa type IV collagenase (MMP2).